A 262-amino-acid chain; its full sequence is (5R,7aS)-5-hydroxy-7a-methyl-1-oxo-2,3,5,6,7,7a-hexahydro-1H-indene-carboxyl-CoA reductase (262 aa).

NAD(+) is bound by residues Asp50, Asp77, Val78, Asn104, Tyr170, Lys174, and Ala203. Catalysis depends on Tyr170, which acts as the Proton acceptor.

This sequence belongs to the short-chain dehydrogenases/reductases (SDR) family.

It carries out the reaction (5R,7aS)-5-hydroxy-7a-methyl-1-oxo-2,3,5,6,7,7a-hexahydro-1H-indene-carboxyl-CoA + NAD(+) = (7aS)-7a-methyl-1,5-dioxo-2,3,5,6,7,7a-hexahydro-1H-indene-carboxyl-CoA + NADH + H(+). It participates in steroid metabolism; cholesterol degradation. Its activity is regulated as follows. Requires the presence of IpdC. In terms of biological role, involved in the final steps of cholesterol and steroid degradation. Probably catalyzes the oxidation of the 5-OH group of (5R,7aS)-5-hydroxy-7a-methyl-1-oxo-2,3,5,6,7,7a-hexahydro-1H-indene-carboxyl-CoA, leading to the formation of HIEC-CoA. The chain is (5R,7aS)-5-hydroxy-7a-methyl-1-oxo-2,3,5,6,7,7a-hexahydro-1H-indene-carboxyl-CoA reductase from Mycobacterium tuberculosis (strain ATCC 25618 / H37Rv).